Consider the following 439-residue polypeptide: Branched-chain amino acid permease BrnQ (439 aa).

The Cytoplasmic segment spans residues 1–9; sequence MTHQLKSRD. Residues 10 to 30 form a helical membrane-spanning segment; the sequence is IIALGFMTFALFVGAGNIIFP. Residues 31–43 are Periplasmic-facing; sequence PMVGLQAGEHVWT. Residues 44–64 traverse the membrane as a helical segment; sequence AAIGFLITAVGLPVLTVVALA. Topologically, residues 65-79 are cytoplasmic; it reads KVGGGVDSLSTPIGK. The chain crosses the membrane as a helical span at residues 80 to 100; it reads VAGLLLATVCYLAVGPLFATP. Topologically, residues 101-118 are periplasmic; that stretch reads RTATVSFEVGIAPLTGDS. Residues 119–139 form a helical membrane-spanning segment; it reads AMPLLIYSVVYFAIVILVSLY. Topologically, residues 140 to 149 are cytoplasmic; that stretch reads PGKLLDTVGN. Residues 150 to 170 form a helical membrane-spanning segment; that stretch reads FLAPLKIIALVILSVAAIVWP. Topologically, residues 171-189 are periplasmic; that stretch reads AGPISNALDAYQNAAFSNG. A helical membrane pass occupies residues 190 to 210; it reads FVNGYLTMDTLGAMVFGIVIV. At 211–226 the chain is on the cytoplasmic side; it reads NAARSRGVTEARLLTR. Residues 227–247 form a helical membrane-spanning segment; sequence YTVWAGLMAGVGLTLLYLALF. The Periplasmic segment spans residues 248–277; it reads RLGSDSATLVDQSANGAAILHAYVQHTFGG. The helical transmembrane segment at 278 to 298 threads the bilayer; sequence AGSFLLAALIFIACLVTAVGL. The Cytoplasmic segment spans residues 299–316; the sequence is TCACAEFFAQYIPLSYRT. A helical membrane pass occupies residues 317–337; it reads LVFILGGFSMVVSNLGLSHLI. Position 338 (glutamine 338) is a topological domain, periplasmic. Residues 339–359 traverse the membrane as a helical segment; sequence ISIPVLTAIYPPCIALVVLSF. The Cytoplasmic portion of the chain corresponds to 360 to 369; it reads TRSWWHNSTR. A helical membrane pass occupies residues 370-390; sequence IIAPAMFISLLFGILDGIKAS. Topologically, residues 391–404 are periplasmic; it reads AFGDMLPAWSQRLP. Residues 405 to 425 form a helical membrane-spanning segment; it reads LAEQGLAWLMPTVVMVILAII. The Cytoplasmic portion of the chain corresponds to 426–439; the sequence is WDRAAGRQVTSSAH.

The protein belongs to the branched chain amino acid transporter family.

It is found in the cell inner membrane. Liv-II branched chain amino acid transport system, which transports leucine, valine and isoleucine. The chain is Branched-chain amino acid permease BrnQ from Salmonella typhimurium (strain LT2 / SGSC1412 / ATCC 700720).